Reading from the N-terminus, the 227-residue chain is CDP-diacylglycerol--glycerol-3-phosphate 3-phosphatidyltransferase (227 aa).

Helical transmembrane passes span 30–50 (IFIA…GSVA), 58–78 (VTIH…TAVI), 112–132 (VLIA…VIVL), 159–179 (WKTT…SFSL), and 192–212 (WAIV…SFGI).

It belongs to the CDP-alcohol phosphatidyltransferase class-I family.

The protein localises to the cell membrane. The catalysed reaction is a CDP-1,2-diacyl-sn-glycerol + sn-glycerol 3-phosphate = a 1,2-diacyl-sn-glycero-3-phospho-(1'-sn-glycero-3'-phosphate) + CMP + H(+). Its pathway is phospholipid metabolism; phosphatidylglycerol biosynthesis; phosphatidylglycerol from CDP-diacylglycerol: step 1/2. Functionally, this protein catalyzes the committed step to the synthesis of the acidic phospholipids. This Mycoplasma pneumoniae (strain ATCC 29342 / M129 / Subtype 1) (Mycoplasmoides pneumoniae) protein is CDP-diacylglycerol--glycerol-3-phosphate 3-phosphatidyltransferase (pgsA).